A 245-amino-acid polypeptide reads, in one-letter code: 8-amino-3,8-dideoxy-manno-octulosonate cytidylyltransferase (245 aa).

The protein belongs to the KdsB family.

The protein resides in the cytoplasm. It catalyses the reaction 8-amino-3,8-dideoxy-alpha-D-manno-octulosonate + CTP = CMP-8-amino-3,8-dideoxy-alpha-D-manno-oct-2-ulosonate + diphosphate. It participates in bacterial outer membrane biogenesis; lipopolysaccharide biosynthesis. Activates KDO8N (a required 8-carbon sugar) for incorporation into bacterial lipopolysaccharide in the Shewanella genus. This Shewanella baltica (strain OS185) protein is 8-amino-3,8-dideoxy-manno-octulosonate cytidylyltransferase.